Reading from the N-terminus, the 331-residue chain is Ribose operon repressor (331 aa).

Residues 1–56 form the HTH lacI-type domain; it reads MTTIRDVAKHAKVSVATVSRVLNKKGYVSKEAEEAVLQAIKELNYQPSSVARSLYH. The H-T-H motif DNA-binding region spans 4–23; sequence IRDVAKHAKVSVATVSRVLN.

Functionally, transcriptional repressor for the ribose rbsDACBK operon. The sequence is that of Ribose operon repressor (rbsR) from Halalkalibacterium halodurans (strain ATCC BAA-125 / DSM 18197 / FERM 7344 / JCM 9153 / C-125) (Bacillus halodurans).